A 283-amino-acid polypeptide reads, in one-letter code: Urease accessory protein UreD (283 aa).

This sequence belongs to the UreD family. As to quaternary structure, ureD, UreF and UreG form a complex that acts as a GTP-hydrolysis-dependent molecular chaperone, activating the urease apoprotein by helping to assemble the nickel containing metallocenter of UreC. The UreE protein probably delivers the nickel.

It is found in the cytoplasm. In terms of biological role, required for maturation of urease via the functional incorporation of the urease nickel metallocenter. This Acaryochloris marina (strain MBIC 11017) protein is Urease accessory protein UreD.